A 329-amino-acid polypeptide reads, in one-letter code: Bifunctional nuclease 2 (329 aa).

The BFN domain maps to 121 to 256 (CVHNNPQGGN…YLAYSDGMRV (136 aa)). Residues 287-322 (DTKEFDLVRNMMQAVDEERYDEAAEWRDKLGKFQAK) form the UVR domain.

The protein belongs to the bifunctional nuclease family.

Its subcellular location is the nucleus. Bifunctional nuclease with both RNase and DNase activities. Involved in basal defense response. Participates in abscisic acid-derived callose deposition following infection by a necrotrophic pathogen. The sequence is that of Bifunctional nuclease 2 (BBD2) from Arabidopsis thaliana (Mouse-ear cress).